Consider the following 74-residue polypeptide: Small ribosomal subunit protein bS20c (74 aa).

It belongs to the bacterial ribosomal protein bS20 family.

It is found in the plastid. The protein resides in the chloroplast. Binds directly to 16S ribosomal RNA. The protein is Small ribosomal subunit protein bS20c of Cyanidioschyzon merolae (strain NIES-3377 / 10D) (Unicellular red alga).